The following is a 114-amino-acid chain: T cell receptor alpha variable 12-3 (114 aa).

Positions 1-21 (MMKSLRVLLVILWLQLSWVWS) are cleaved as a signal peptide. The Ig-like domain maps to 24-114 (KEVEQDPGPL…DSATYLCAMS (91 aa)). N-linked (GlcNAc...) asparagine glycosylation is present at Asn44. A disulfide bond links Cys45 and Cys111.

Alpha-beta TR is a heterodimer composed of an alpha and beta chain; disulfide-linked. The alpha-beta TR is associated with the transmembrane signaling CD3 coreceptor proteins to form the TR-CD3 (TcR or TCR). The assembly of alpha-beta TR heterodimers with CD3 occurs in the endoplasmic reticulum where a single alpha-beta TR heterodimer associates with one CD3D-CD3E heterodimer, one CD3G-CD3E heterodimer and one CD247 homodimer forming a stable octameric structure. CD3D-CD3E and CD3G-CD3E heterodimers preferentially associate with TR alpha and TR beta chains, respectively. The association of the CD247 homodimer is the last step of TcR assembly in the endoplasmic reticulum and is required for transport to the cell surface.

It localises to the cell membrane. V region of the variable domain of T cell receptor (TR) alpha chain that participates in the antigen recognition. Alpha-beta T cell receptors are antigen specific receptors which are essential to the immune response and are present on the cell surface of T lymphocytes. Recognize peptide-major histocompatibility (MH) (pMH) complexes that are displayed by antigen presenting cells (APC), a prerequisite for efficient T cell adaptive immunity against pathogens. Binding of alpha-beta TR to pMH complex initiates TR-CD3 clustering on the cell surface and intracellular activation of LCK that phosphorylates the ITAM motifs of CD3G, CD3D, CD3E and CD247 enabling the recruitment of ZAP70. In turn ZAP70 phosphorylates LAT, which recruits numerous signaling molecules to form the LAT signalosome. The LAT signalosome propagates signal branching to three major signaling pathways, the calcium, the mitogen-activated protein kinase (MAPK) kinase and the nuclear factor NF-kappa-B (NF-kB) pathways, leading to the mobilization of transcription factors that are critical for gene expression and essential for T cell growth and differentiation. The T cell repertoire is generated in the thymus, by V-(D)-J rearrangement. This repertoire is then shaped by intrathymic selection events to generate a peripheral T cell pool of self-MH restricted, non-autoaggressive T cells. Post-thymic interaction of alpha-beta TR with the pMH complexes shapes TR structural and functional avidity. This Homo sapiens (Human) protein is T cell receptor alpha variable 12-3.